Here is a 281-residue protein sequence, read N- to C-terminus: Shikimate dehydrogenase (NADP(+)) (281 aa).

Shikimate-binding positions include 15–17 and Thr62; that span reads SKS. Lys66 serves as the catalytic Proton acceptor. Asn87 and Asp102 together coordinate shikimate. Residues 127-131, 151-156, and Leu217 contribute to the NADP(+) site; these read GAGGS and NRTPER. Residue Tyr219 participates in shikimate binding. Gly241 is an NADP(+) binding site.

Belongs to the shikimate dehydrogenase family. As to quaternary structure, homodimer.

It catalyses the reaction shikimate + NADP(+) = 3-dehydroshikimate + NADPH + H(+). It participates in metabolic intermediate biosynthesis; chorismate biosynthesis; chorismate from D-erythrose 4-phosphate and phosphoenolpyruvate: step 4/7. In terms of biological role, involved in the biosynthesis of the chorismate, which leads to the biosynthesis of aromatic amino acids. Catalyzes the reversible NADPH linked reduction of 3-dehydroshikimate (DHSA) to yield shikimate (SA). This chain is Shikimate dehydrogenase (NADP(+)), found in Stenotrophomonas maltophilia (strain R551-3).